The sequence spans 335 residues: Methionine import ATP-binding protein MetN (335 aa).

An ABC transporter domain is found at 2-241; the sequence is IEFQRLHKSY…PKHVTTRRFV (240 aa). Residue 38-45 participates in ATP binding; that stretch reads GHSGAGKS.

It belongs to the ABC transporter superfamily. Methionine importer (TC 3.A.1.24) family. In terms of assembly, the complex is composed of two ATP-binding proteins (MetN), two transmembrane proteins (MetI) and a solute-binding protein (MetQ).

The protein localises to the cell inner membrane. It catalyses the reaction L-methionine(out) + ATP + H2O = L-methionine(in) + ADP + phosphate + H(+). The catalysed reaction is D-methionine(out) + ATP + H2O = D-methionine(in) + ADP + phosphate + H(+). Its function is as follows. Part of the ABC transporter complex MetNIQ involved in methionine import. Responsible for energy coupling to the transport system. The polypeptide is Methionine import ATP-binding protein MetN (Xanthomonas oryzae pv. oryzae (strain KACC10331 / KXO85)).